An 835-amino-acid polypeptide reads, in one-letter code: Beta-galactosidase (835 aa).

A signal peptide spans M1–A22. E180 serves as the catalytic Proton donor. The active-site Nucleophile is E249. Residues R749–S835 form the SUEL-type lectin domain.

This sequence belongs to the glycosyl hydrolase 35 family.

The enzyme catalyses Hydrolysis of terminal non-reducing beta-D-galactose residues in beta-D-galactosides.. Its function is as follows. Involved in cell wall degradation. Degrades polysaccharides containing beta-(1--&gt;4)-linked galactans, acting as an exo-(1--&gt;4)-beta-D-galactanase. This is Beta-galactosidase from Solanum lycopersicum (Tomato).